Consider the following 408-residue polypeptide: Probable E3 ubiquitin-protein ligase makorin-1 (408 aa).

C3H1-type zinc fingers lie at residues 34 to 61 (WTRH…HDLA) and 63 to 90 (SRSA…HNKP). 2 disordered regions span residues 90–114 (PLQE…SGNI) and 154–173 (EAYT…PADP). Residues 162-173 (KPDEGREEPADP) are compositionally biased toward basic and acidic residues. The segment at 174 to 201 (ELKKQLCPYAAMGECRYGENCVYLHGDP) adopts a C3H1-type 3 zinc-finger fold. The interval 202–229 (CDMCGLQVLHPVDTCQRSQHIKSCIEAH) is makorin-type Cys-His. Residues 247 to 301 (CGICMEVVYEKTNPSERRFGILSNCSHSYCLKCIRKWRSAKQFESKIIKSCPECR) form an RING-type zinc finger. The segment at 330–359 (AMSSKSCRYFDEGRGTCPFGGNCFYRHAYP) adopts a C3H1-type 4 zinc-finger fold. The interval 363–408 (IEEPQPRQKSGMSSRYRIPSPSAGIDFGSLTSERAETRLRTRKTKL) is disordered.

The enzyme catalyses S-ubiquitinyl-[E2 ubiquitin-conjugating enzyme]-L-cysteine + [acceptor protein]-L-lysine = [E2 ubiquitin-conjugating enzyme]-L-cysteine + N(6)-ubiquitinyl-[acceptor protein]-L-lysine.. It functions in the pathway protein modification; protein ubiquitination. E3 ubiquitin ligase catalyzing the covalent attachment of ubiquitin moieties onto substrate proteins. The chain is Probable E3 ubiquitin-protein ligase makorin-1 (mkrn1) from Xenopus laevis (African clawed frog).